The chain runs to 207 residues: Peptidyl-tRNA hydrolase (207 aa).

Residue Tyr-17 coordinates tRNA. Residue His-22 is the Proton acceptor of the active site. Residues Phe-68, Asn-70, and Asn-116 each contribute to the tRNA site.

This sequence belongs to the PTH family. In terms of assembly, monomer.

The protein resides in the cytoplasm. It carries out the reaction an N-acyl-L-alpha-aminoacyl-tRNA + H2O = an N-acyl-L-amino acid + a tRNA + H(+). Functionally, hydrolyzes ribosome-free peptidyl-tRNAs (with 1 or more amino acids incorporated), which drop off the ribosome during protein synthesis, or as a result of ribosome stalling. Its function is as follows. Catalyzes the release of premature peptidyl moieties from peptidyl-tRNA molecules trapped in stalled 50S ribosomal subunits, and thus maintains levels of free tRNAs and 50S ribosomes. The sequence is that of Peptidyl-tRNA hydrolase from Buchnera aphidicola subsp. Baizongia pistaciae (strain Bp).